The primary structure comprises 381 residues: Gas vesicle protein C (381 aa).

A run of 7 repeats spans residues 22–59 (QAFAAYADEFAADVDDKRDVSELVDGIDTLRTEMNSTN), 60–84 (DAFRAYSEEFAADVEHFHTSVADRR), 85–122 (DAFDAYADIFATDVAEMQDVSDLLAAIDDLRAEMDETH), 123–160 (EAFDAYADAFVTDVATLRDVSDLLTAISELQSEFVSVQ), 161–192 (GEFNGYASEFGADIDQFHAVVAEKRDGHKDVA), 193–232 (DAFLQYREEFHGVEVQSLLDNIAAFQREMGDYRKAFETTE), and 233–274 (EAFA…IPPI). The 7 X approximate tandem repeats stretch occupies residues 22 to 274 (QAFAAYADEF…TETEVDIPPI (253 aa)). The segment at 261–333 (AVTGTETEVD…EDDQFLDDET (73 aa)) is disordered. The span at 276–318 (DSVEPDGEDEDSKADDVEAEAEVETVEMEFGAEMDTEADEDVQ) shows a compositional bias: acidic residues.

Belongs to the halobacterial gas vesicle GvpC family. In terms of processing, detected as 2 slightly different sizes in vivo; the proteins appears larger in SDS-PAGE probably due to the acidic tail.

It localises to the gas vesicle. Confers stability, involved in shaping gas vesicles (GV), hollow, gas filled proteinaceous nanostructures found in some microorganisms. They allow positioning of halobacteria at the optimal depth for growth in the poorly aerated, shallow brine pools of their habitat. Functionally, expression of a 9.5 kb mc-vac DNA fragment containing 2 divergently transcribed regions (gvpD-gvpE-gvpF-gvpG-gvpH-gvpI-gvpJ-gvpK-gvpL-gvpM and gvpA-gvpC-gvpN-gvpO) allows H.volcanii to produce gas vesicles. This is Gas vesicle protein C from Haloferax mediterranei (strain ATCC 33500 / DSM 1411 / JCM 8866 / NBRC 14739 / NCIMB 2177 / R-4) (Halobacterium mediterranei).